The sequence spans 148 residues: Large ribosomal subunit protein bL9 (148 aa).

It belongs to the bacterial ribosomal protein bL9 family.

Binds to the 23S rRNA. The chain is Large ribosomal subunit protein bL9 from Ectopseudomonas mendocina (strain ymp) (Pseudomonas mendocina).